The following is a 308-amino-acid chain: Nodulation protein D 1 (308 aa).

Residues L6 to T63 form the HTH lysR-type domain. The H-T-H motif DNA-binding region spans L23–G42.

The protein belongs to the LysR transcriptional regulatory family.

Its function is as follows. NodD regulates the expression of the nodABCFE genes which encode other nodulation proteins. NodD is also a negative regulator of its own expression. Binds flavonoids as inducers. The chain is Nodulation protein D 1 (nodD1) from Rhizobium tropici.